The following is a 149-amino-acid chain: Active regulator of SIRT1 (149 aa).

The segment at 1–64 is disordered; the sequence is MSVSLLRKGL…GLRHDQKATA (64 aa). Over residues 8–19 the composition is skewed to basic and acidic residues; sequence KGLDLLREERSG. A compositionally biased stretch (low complexity) spans 30-41; that stretch reads SSKPKPCLSSSK. The segment covering 43–52 has biased composition (basic residues); it reads GMRKQLRRLK.

It belongs to the AROS family. In terms of assembly, part of the small subunit (SSU) processome, composed of more than 70 proteins and the RNA chaperone small nucleolar RNA (snoRNA) U3.

It is found in the nucleus. The protein localises to the nucleolus. Functionally, part of the small subunit (SSU) processome, first precursor of the small eukaryotic ribosomal subunit. During the assembly of the SSU processome in the nucleolus, many ribosome biogenesis factors, an RNA chaperone and ribosomal proteins associate with the nascent pre-rRNA and work in concert to generate RNA folding, modifications, rearrangements and cleavage as well as targeted degradation of pre-ribosomal RNA by the RNA exosome. Acts as a chaperone that specifically mediates the integration of RPS19 in state post-A1. Direct regulator of SIRT1. In Xenopus tropicalis (Western clawed frog), this protein is Active regulator of SIRT1 (rps19bp1).